The chain runs to 491 residues: Probable cytosol aminopeptidase (491 aa).

Residues Lys261 and Asp266 each coordinate Mn(2+). The active site involves Lys273. Asp284, Asp343, and Glu345 together coordinate Mn(2+). Arg347 is an active-site residue.

It belongs to the peptidase M17 family. The cofactor is Mn(2+).

Its subcellular location is the cytoplasm. The enzyme catalyses Release of an N-terminal amino acid, Xaa-|-Yaa-, in which Xaa is preferably Leu, but may be other amino acids including Pro although not Arg or Lys, and Yaa may be Pro. Amino acid amides and methyl esters are also readily hydrolyzed, but rates on arylamides are exceedingly low.. It catalyses the reaction Release of an N-terminal amino acid, preferentially leucine, but not glutamic or aspartic acids.. In terms of biological role, presumably involved in the processing and regular turnover of intracellular proteins. Catalyzes the removal of unsubstituted N-terminal amino acids from various peptides. The polypeptide is Probable cytosol aminopeptidase (Stenotrophomonas maltophilia (strain K279a)).